Here is a 138-residue protein sequence, read N- to C-terminus: Large ribosomal subunit protein uL16 (138 aa).

It belongs to the universal ribosomal protein uL16 family. In terms of assembly, part of the 50S ribosomal subunit.

Binds 23S rRNA and is also seen to make contacts with the A and possibly P site tRNAs. The protein is Large ribosomal subunit protein uL16 of Paramagnetospirillum magneticum (strain ATCC 700264 / AMB-1) (Magnetospirillum magneticum).